Here is a 557-residue protein sequence, read N- to C-terminus: Membrane protein insertase YidC (557 aa).

The helical transmembrane segment at 3 to 23 (NLRPVLYLSMLLVLFLIWQAW) threads the bilayer. Residues 34 to 60 (APGAQEQVMDRDGVPAPPQDVPDAPVS) are disordered. Transmembrane regions (helical) follow at residues 366–386 (VVGNWGWAIIILTILIKLVFY), 436–456 (LGGCLPILVQIPVFIALYWVL), 480–500 (YFILPILMGVTMIAQYKLNPA), and 514–534 (PFVFTVFFAFFPAGLVLYWFV).

This sequence belongs to the OXA1/ALB3/YidC family. Type 1 subfamily. In terms of assembly, interacts with the Sec translocase complex via SecD. Specifically interacts with transmembrane segments of nascent integral membrane proteins during membrane integration.

The protein localises to the cell inner membrane. Functionally, required for the insertion and/or proper folding and/or complex formation of integral membrane proteins into the membrane. Involved in integration of membrane proteins that insert both dependently and independently of the Sec translocase complex, as well as at least some lipoproteins. Aids folding of multispanning membrane proteins. The chain is Membrane protein insertase YidC from Thioalkalivibrio sulfidiphilus (strain HL-EbGR7).